Consider the following 326-residue polypeptide: Malate dehydrogenase (326 aa).

Residue 11–17 (GAAGQIG) coordinates NAD(+). The substrate site is built by R92 and R98. NAD(+) is bound by residues N105, Q112, and 129–131 (VGN). Positions 131 and 162 each coordinate substrate. H187 acts as the Proton acceptor in catalysis.

Belongs to the LDH/MDH superfamily. MDH type 2 family.

The catalysed reaction is (S)-malate + NAD(+) = oxaloacetate + NADH + H(+). Functionally, catalyzes the reversible oxidation of malate to oxaloacetate. The polypeptide is Malate dehydrogenase (Leptospira interrogans serogroup Icterohaemorrhagiae serovar Lai (strain 56601)).